Reading from the N-terminus, the 386-residue chain is Glucose-1-phosphate adenylyltransferase (386 aa).

Residues Tyr-99, Gly-164, Glu-179–Lys-180, and Ser-190 contribute to the alpha-D-glucose 1-phosphate site.

The protein belongs to the bacterial/plant glucose-1-phosphate adenylyltransferase family. Homotetramer.

The enzyme catalyses alpha-D-glucose 1-phosphate + ATP + H(+) = ADP-alpha-D-glucose + diphosphate. The protein operates within glycan biosynthesis; glycogen biosynthesis. In terms of biological role, involved in the biosynthesis of ADP-glucose, a building block required for the elongation reactions to produce glycogen. Catalyzes the reaction between ATP and alpha-D-glucose 1-phosphate (G1P) to produce pyrophosphate and ADP-Glc. The sequence is that of Glucose-1-phosphate adenylyltransferase from Clostridioides difficile (strain 630) (Peptoclostridium difficile).